Consider the following 1040-residue polypeptide: Multidrug resistance protein MdtB (1040 aa).

12 helical membrane-spanning segments follow: residues 16–36 (FIMR…AGII), 342–362 (DTQF…YVFL), 369–389 (IIPA…MVFL), 396–416 (LTLM…IVVI), 440–460 (IGFT…PLLF), 472–492 (FAVT…TLTP), 537–557 (WATL…WIVI), 869–889 (LIVA…ESFI), 890–910 (HPVT…LALM), 911–931 (LSGS…IGIV), 968–988 (ILMT…STGV), and 998–1018 (IGMV…TPVI).

Belongs to the resistance-nodulation-cell division (RND) (TC 2.A.6) family. MdtB subfamily. In terms of assembly, part of a tripartite efflux system composed of MdtA, MdtB and MdtC. MdtB forms a heteromultimer with MdtC.

Its subcellular location is the cell inner membrane. This is Multidrug resistance protein MdtB from Enterobacter sp. (strain 638).